Consider the following 274-residue polypeptide: Large ribosomal subunit protein uL2 (274 aa).

Residues 195–274 (VGNSDHGLER…SKYIIERRKK (80 aa)) form a disordered region. Composition is skewed to basic residues over residues 207 to 220 (KAGRSRWQGRRPRN) and 244 to 264 (PRSRKGLYAKGLKTRAPKKQS).

This sequence belongs to the universal ribosomal protein uL2 family. Part of the 50S ribosomal subunit. Forms a bridge to the 30S subunit in the 70S ribosome.

In terms of biological role, one of the primary rRNA binding proteins. Required for association of the 30S and 50S subunits to form the 70S ribosome, for tRNA binding and peptide bond formation. It has been suggested to have peptidyltransferase activity; this is somewhat controversial. Makes several contacts with the 16S rRNA in the 70S ribosome. In Bacteroides thetaiotaomicron (strain ATCC 29148 / DSM 2079 / JCM 5827 / CCUG 10774 / NCTC 10582 / VPI-5482 / E50), this protein is Large ribosomal subunit protein uL2.